A 272-amino-acid chain; its full sequence is Dermonecrotic toxin LvSicTox-alphaIC1aiii (272 aa).

Histidine 4 is a catalytic residue. The Mg(2+) site is built by glutamate 24 and aspartate 26. Catalysis depends on histidine 40, which acts as the Nucleophile. 2 disulfide bridges follow: cysteine 44-cysteine 50 and cysteine 46-cysteine 189. Aspartate 84 is a Mg(2+) binding site.

It belongs to the arthropod phospholipase D family. Class II subfamily. Mg(2+) serves as cofactor. As to expression, expressed by the venom gland.

It localises to the secreted. The catalysed reaction is an N-(acyl)-sphingosylphosphocholine = an N-(acyl)-sphingosyl-1,3-cyclic phosphate + choline. It carries out the reaction an N-(acyl)-sphingosylphosphoethanolamine = an N-(acyl)-sphingosyl-1,3-cyclic phosphate + ethanolamine. The enzyme catalyses a 1-acyl-sn-glycero-3-phosphocholine = a 1-acyl-sn-glycero-2,3-cyclic phosphate + choline. It catalyses the reaction a 1-acyl-sn-glycero-3-phosphoethanolamine = a 1-acyl-sn-glycero-2,3-cyclic phosphate + ethanolamine. Functionally, dermonecrotic toxins cleave the phosphodiester linkage between the phosphate and headgroup of certain phospholipids (sphingolipid and lysolipid substrates), forming an alcohol (often choline) and a cyclic phosphate. This toxin acts on sphingomyelin (SM). It may also act on ceramide phosphoethanolamine (CPE), lysophosphatidylcholine (LPC) and lysophosphatidylethanolamine (LPE), but not on lysophosphatidylserine (LPS), and lysophosphatidylglycerol (LPG). It acts by transphosphatidylation, releasing exclusively cyclic phosphate products as second products. Induces dermonecrosis, hemolysis, increased vascular permeability, edema, inflammatory response, and platelet aggregation. The protein is Dermonecrotic toxin LvSicTox-alphaIC1aiii of Loxosceles variegata (Recluse spider).